A 214-amino-acid polypeptide reads, in one-letter code: Putative pit accessory protein (214 aa).

This sequence belongs to the UPF0111 family.

In terms of biological role, could be involved in orthophosphate transport. In Rhizobium meliloti (strain 1021) (Ensifer meliloti), this protein is Putative pit accessory protein.